The sequence spans 221 residues: Glutathione peroxidase 6 (221 aa).

A signal peptide spans 1-19 (MFQQFQASCLVLFFLVGFA). The active site involves Sec73. Residue Sec73 is a non-standard amino acid, selenocysteine.

Belongs to the glutathione peroxidase family. In terms of tissue distribution, expressed in olfactory epithelium and embryos.

Its subcellular location is the secreted. It carries out the reaction 2 glutathione + H2O2 = glutathione disulfide + 2 H2O. The protein is Glutathione peroxidase 6 (GPX6) of Homo sapiens (Human).